The chain runs to 632 residues: 1-deoxy-D-xylulose-5-phosphate synthase (632 aa).

Thiamine diphosphate-binding positions include His-78 and 119–121; that span reads AHS. Residue Asp-150 coordinates Mg(2+). Residues 151–152, Asn-179, Tyr-286, and Glu-368 each bind thiamine diphosphate; that span reads GA. A Mg(2+)-binding site is contributed by Asn-179.

The protein belongs to the transketolase family. DXPS subfamily. Homodimer. Requires Mg(2+) as cofactor. Thiamine diphosphate is required as a cofactor.

The enzyme catalyses D-glyceraldehyde 3-phosphate + pyruvate + H(+) = 1-deoxy-D-xylulose 5-phosphate + CO2. The protein operates within metabolic intermediate biosynthesis; 1-deoxy-D-xylulose 5-phosphate biosynthesis; 1-deoxy-D-xylulose 5-phosphate from D-glyceraldehyde 3-phosphate and pyruvate: step 1/1. Catalyzes the acyloin condensation reaction between C atoms 2 and 3 of pyruvate and glyceraldehyde 3-phosphate to yield 1-deoxy-D-xylulose-5-phosphate (DXP). The protein is 1-deoxy-D-xylulose-5-phosphate synthase of Albidiferax ferrireducens (strain ATCC BAA-621 / DSM 15236 / T118) (Rhodoferax ferrireducens).